The chain runs to 313 residues: tRNA pseudouridine synthase B (313 aa).

Residue Asp-46 is the Nucleophile of the active site.

This sequence belongs to the pseudouridine synthase TruB family. Type 1 subfamily.

The catalysed reaction is uridine(55) in tRNA = pseudouridine(55) in tRNA. In terms of biological role, responsible for synthesis of pseudouridine from uracil-55 in the psi GC loop of transfer RNAs. The sequence is that of tRNA pseudouridine synthase B from Nitrosospira multiformis (strain ATCC 25196 / NCIMB 11849 / C 71).